The chain runs to 184 residues: Inactive ribonuclease-like protein 9 (184 aa).

The signal sequence occupies residues 1–25 (MKPLVIKFAWPLPLLLLLLLPPKLQ). Intrachain disulfides connect Cys-93/Cys-148, Cys-111/Cys-163, and Cys-118/Cys-125. Asn-147 and Asn-179 each carry an N-linked (GlcNAc...) asparagine glycan.

It belongs to the pancreatic ribonuclease family.

It is found in the secreted. Its function is as follows. Does not exhibit any ribonuclease activity. This is Inactive ribonuclease-like protein 9 (Rnase9) from Mus musculus (Mouse).